The following is a 583-amino-acid chain: Moesin/ezrin/radixin homolog 1 (583 aa).

An FERM domain is found at 11-301 (MNVRVTTMDA…GNHELYMRRR (291 aa)). Disordered stretches follow at residues 466–518 (TTTP…RTLA) and 539–558 (RDDT…VRQG). Residues 476 to 485 (EEEEDNEEEL) show a composition bias toward acidic residues. Positions 496 to 518 (DYSKDFDTDEHIKDPVEERRTLA) are enriched in basic and acidic residues. Threonine 564 carries the phosphothreonine modification.

Interacts with cytoskeletal actin.

The protein resides in the cell junction. It localises to the adherens junction. Its subcellular location is the cell projection. The protein localises to the microvillus. It is found in the rhabdomere. The protein resides in the cell membrane. It localises to the cytoplasm. Its subcellular location is the cytoskeleton. Involved in connections of major cytoskeletal structures to the plasma membrane. In Aedes aegypti (Yellowfever mosquito), this protein is Moesin/ezrin/radixin homolog 1.